The sequence spans 417 residues: UPF0597 protein Cphy_1256 (417 aa).

Belongs to the UPF0597 family.

The protein is UPF0597 protein Cphy_1256 of Lachnoclostridium phytofermentans (strain ATCC 700394 / DSM 18823 / ISDg) (Clostridium phytofermentans).